Reading from the N-terminus, the 593-residue chain is Translation initiation factor IF-2 (593 aa).

The tr-type G domain maps to 101-270; the sequence is LRPPVVTIMG…LLIAELEDLR (170 aa). The tract at residues 110–117 is G1; that stretch reads GHVDHGKT. 110–117 contacts GTP; sequence GHVDHGKT. Positions 135–139 are G2; sequence GITQH. The G3 stretch occupies residues 156–159; sequence DTPG. Residues 156–160 and 210–213 each bind GTP; these read DTPGH and NKMD. The segment at 210-213 is G4; it reads NKMD. The interval 246 to 248 is G5; the sequence is SAR.

Belongs to the TRAFAC class translation factor GTPase superfamily. Classic translation factor GTPase family. IF-2 subfamily.

The protein resides in the cytoplasm. Functionally, one of the essential components for the initiation of protein synthesis. Protects formylmethionyl-tRNA from spontaneous hydrolysis and promotes its binding to the 30S ribosomal subunits. Also involved in the hydrolysis of GTP during the formation of the 70S ribosomal complex. The chain is Translation initiation factor IF-2 from Dehalococcoides mccartyi (strain CBDB1).